We begin with the raw amino-acid sequence, 337 residues long: Holliday junction branch migration complex subunit RuvB (337 aa).

The large ATPase domain (RuvB-L) stretch occupies residues alanine 4–tyrosine 186. ATP-binding positions include isoleucine 25, arginine 26, glycine 67, lysine 70, threonine 71, threonine 72, glutamate 133 to tyrosine 135, arginine 176, tyrosine 186, and arginine 223. Threonine 71 is a binding site for Mg(2+). The tract at residues lysine 187–aspartate 257 is small ATPAse domain (RuvB-S). The head domain (RuvB-H) stretch occupies residues valine 260–lysine 337. DNA contacts are provided by arginine 296, arginine 315, and arginine 320.

Belongs to the RuvB family. Homohexamer. Forms an RuvA(8)-RuvB(12)-Holliday junction (HJ) complex. HJ DNA is sandwiched between 2 RuvA tetramers; dsDNA enters through RuvA and exits via RuvB. An RuvB hexamer assembles on each DNA strand where it exits the tetramer. Each RuvB hexamer is contacted by two RuvA subunits (via domain III) on 2 adjacent RuvB subunits; this complex drives branch migration. In the full resolvosome a probable DNA-RuvA(4)-RuvB(12)-RuvC(2) complex forms which resolves the HJ.

It is found in the cytoplasm. The enzyme catalyses ATP + H2O = ADP + phosphate + H(+). In terms of biological role, the RuvA-RuvB-RuvC complex processes Holliday junction (HJ) DNA during genetic recombination and DNA repair, while the RuvA-RuvB complex plays an important role in the rescue of blocked DNA replication forks via replication fork reversal (RFR). RuvA specifically binds to HJ cruciform DNA, conferring on it an open structure. The RuvB hexamer acts as an ATP-dependent pump, pulling dsDNA into and through the RuvAB complex. RuvB forms 2 homohexamers on either side of HJ DNA bound by 1 or 2 RuvA tetramers; 4 subunits per hexamer contact DNA at a time. Coordinated motions by a converter formed by DNA-disengaged RuvB subunits stimulates ATP hydrolysis and nucleotide exchange. Immobilization of the converter enables RuvB to convert the ATP-contained energy into a lever motion, pulling 2 nucleotides of DNA out of the RuvA tetramer per ATP hydrolyzed, thus driving DNA branch migration. The RuvB motors rotate together with the DNA substrate, which together with the progressing nucleotide cycle form the mechanistic basis for DNA recombination by continuous HJ branch migration. Branch migration allows RuvC to scan DNA until it finds its consensus sequence, where it cleaves and resolves cruciform DNA. This chain is Holliday junction branch migration complex subunit RuvB, found in Aliivibrio fischeri (strain ATCC 700601 / ES114) (Vibrio fischeri).